The sequence spans 338 residues: Lipoate-protein ligase A (338 aa).

The 188-residue stretch at 29–216 folds into the BPL/LPL catalytic domain; the sequence is PATQRVLFLW…AFFAHYGERV (188 aa). ATP is bound by residues R71, 76 to 79, and K134; that span reads GAVF. K134 contacts (R)-lipoate.

The protein belongs to the LplA family. In terms of assembly, monomer.

It is found in the cytoplasm. The enzyme catalyses L-lysyl-[lipoyl-carrier protein] + (R)-lipoate + ATP = N(6)-[(R)-lipoyl]-L-lysyl-[lipoyl-carrier protein] + AMP + diphosphate + H(+). Its pathway is protein modification; protein lipoylation via exogenous pathway; protein N(6)-(lipoyl)lysine from lipoate: step 1/2. It participates in protein modification; protein lipoylation via exogenous pathway; protein N(6)-(lipoyl)lysine from lipoate: step 2/2. Catalyzes both the ATP-dependent activation of exogenously supplied lipoate to lipoyl-AMP and the transfer of the activated lipoyl onto the lipoyl domains of lipoate-dependent enzymes. The sequence is that of Lipoate-protein ligase A from Escherichia coli O6:K15:H31 (strain 536 / UPEC).